We begin with the raw amino-acid sequence, 431 residues long: Adenylosuccinate synthetase (431 aa).

Residues 12–18 (GDEGKGK) and 40–42 (GHT) contribute to the GTP site. The active-site Proton acceptor is the Asp-13. 2 residues coordinate Mg(2+): Asp-13 and Gly-40. IMP contacts are provided by residues 13–16 (DEGK), 38–41 (NAGH), Thr-129, Arg-143, Gln-224, Thr-239, and Arg-303. The active-site Proton donor is the His-41. 299-305 (VTTGRAR) is a substrate binding site. GTP is bound by residues Arg-305, 331-333 (KLD), and 413-415 (GVG).

Belongs to the adenylosuccinate synthetase family. In terms of assembly, homodimer. Requires Mg(2+) as cofactor.

It localises to the cytoplasm. It carries out the reaction IMP + L-aspartate + GTP = N(6)-(1,2-dicarboxyethyl)-AMP + GDP + phosphate + 2 H(+). The protein operates within purine metabolism; AMP biosynthesis via de novo pathway; AMP from IMP: step 1/2. Its function is as follows. Plays an important role in the de novo pathway of purine nucleotide biosynthesis. Catalyzes the first committed step in the biosynthesis of AMP from IMP. The protein is Adenylosuccinate synthetase of Mycobacteroides abscessus (strain ATCC 19977 / DSM 44196 / CCUG 20993 / CIP 104536 / JCM 13569 / NCTC 13031 / TMC 1543 / L948) (Mycobacterium abscessus).